The sequence spans 1026 residues: Multidrug resistance protein MdtC (1026 aa).

Helical transmembrane passes span 15 to 35, 333 to 353, 360 to 380, 387 to 407, 431 to 451, 463 to 483, 528 to 548, 853 to 873, 897 to 917, 953 to 973, and 984 to 1004; these read ILIA…LPVA, EVEE…FLFL, LIPA…MYLC, LSLM…IVVL, VGFT…PLLL, FAVT…TLTP, LVGV…IAIP, LILI…LYES, LFNA…IGIV, PIMM…LSGG, and ITIV…TPVV.

It belongs to the resistance-nodulation-cell division (RND) (TC 2.A.6) family. MdtC subfamily. As to quaternary structure, part of a tripartite efflux system composed of MdtA, MdtB and MdtC. MdtC forms a heteromultimer with MdtB.

The protein resides in the cell inner membrane. In Salmonella paratyphi A (strain ATCC 9150 / SARB42), this protein is Multidrug resistance protein MdtC.